The chain runs to 365 residues: Protein-glutamate methylesterase/protein-glutamine glutaminase (365 aa).

The Response regulatory domain occupies 5–122 (KVLIVDDSAF…SLDIRKIGEK (118 aa)). Asp-56 is subject to 4-aspartylphosphate. Residues 146-155 (IKKEKQDESS) show a composition bias toward basic and acidic residues. Residues 146-167 (IKKEKQDESSTPKPQVEKTSGL) form a disordered region. Over residues 156–167 (TPKPQVEKTSGL) the composition is skewed to polar residues. One can recognise a CheB-type methylesterase domain in the interval 177 to 363 (ILIGSSTGGP…LEIIKFAKKI (187 aa)). Residues Ser-182, His-208, and Asp-305 contribute to the active site.

Belongs to the CheB family. Post-translationally, phosphorylated by CheA. Phosphorylation of the N-terminal regulatory domain activates the methylesterase activity.

It localises to the cytoplasm. The catalysed reaction is [protein]-L-glutamate 5-O-methyl ester + H2O = L-glutamyl-[protein] + methanol + H(+). The enzyme catalyses L-glutaminyl-[protein] + H2O = L-glutamyl-[protein] + NH4(+). Its function is as follows. Involved in chemotaxis. Part of a chemotaxis signal transduction system that modulates chemotaxis in response to various stimuli. Catalyzes the demethylation of specific methylglutamate residues introduced into the chemoreceptors (methyl-accepting chemotaxis proteins or MCP) by CheR. Also mediates the irreversible deamidation of specific glutamine residues to glutamic acid. This Methanococcus maripaludis (strain DSM 14266 / JCM 13030 / NBRC 101832 / S2 / LL) protein is Protein-glutamate methylesterase/protein-glutamine glutaminase.